Here is a 702-residue protein sequence, read N- to C-terminus: Dissimilatory sulfite reductase MccA (702 aa).

The first 39 residues, 1–39, serve as a signal peptide directing secretion; it reads MLSGWSVLKGGNMKYWDKALLSLFMCVSTLSIAATHAVA. Heme c contacts are provided by C155, C158, H159, and H171. K220 and Y297 together coordinate substrate. Residues C314, C317, H318, C351, C354, H355, H360, C372, C375, and H376 each coordinate heme c. Position 378 (R378) interacts with substrate. C411 lines the Cu(+) pocket. 12 residues coordinate heme c: H423, C430, C433, H434, H437, C474, C477, H478, H491, C496, C499, and H500. C507 is a binding site for Cu(+). Heme c contacts are provided by H528, C574, C590, H591, and H675.

Belongs to the multiheme cytochrome c family. As to quaternary structure, homotrimer. Cu(+) serves as cofactor. Heme c is required as a cofactor.

The protein resides in the periplasm. It catalyses the reaction [protein]-disulfide + hydrogen sulfide + 2 A + 3 H2O = [protein]-dithiol + sulfite + 2 AH2 + H(+). It participates in sulfur metabolism; sulfite reduction. In terms of biological role, respiratory sulfite reductase that catalyzes the reduction of sulfite to sulfide in a single step, consuming six electrons in the process. Required for sulfite respiration under anaerobic growth conditions. Has only marginal activity with nitrite. The polypeptide is Dissimilatory sulfite reductase MccA (Wolinella succinogenes (strain ATCC 29543 / DSM 1740 / CCUG 13145 / JCM 31913 / LMG 7466 / NCTC 11488 / FDC 602W) (Vibrio succinogenes)).